Reading from the N-terminus, the 314-residue chain is Carbamate kinase (314 aa).

It belongs to the carbamate kinase family. In terms of assembly, homodimer.

The protein resides in the cytoplasm. It carries out the reaction hydrogencarbonate + NH4(+) + ATP = carbamoyl phosphate + ADP + H2O + H(+). This chain is Carbamate kinase (cpkA), found in Pyrococcus horikoshii (strain ATCC 700860 / DSM 12428 / JCM 9974 / NBRC 100139 / OT-3).